The chain runs to 337 residues: Putative carboxypeptidase TP_0688 (337 aa).

Serine 118 functions as the Nucleophile in the catalytic mechanism. Catalysis depends on charge relay system residues glutamate 234 and histidine 302.

The protein belongs to the peptidase S66 family.

The chain is Putative carboxypeptidase TP_0688 from Treponema pallidum (strain Nichols).